Consider the following 527-residue polypeptide: Probable malate:quinone oxidoreductase (527 aa).

This sequence belongs to the MQO family. Requires FAD as cofactor.

The enzyme catalyses (S)-malate + a quinone = a quinol + oxaloacetate. It functions in the pathway carbohydrate metabolism; tricarboxylic acid cycle; oxaloacetate from (S)-malate (quinone route): step 1/1. The sequence is that of Probable malate:quinone oxidoreductase from Pectobacterium carotovorum subsp. carotovorum (strain PC1).